The primary structure comprises 138 residues: Type II secretion system protein I (138 aa).

A propeptide spans 1–6 (MKHQRG) (leader sequence). At Tyr7 the chain carries N-methyltyrosine. The chain crosses the membrane as a helical span at residues 7–29 (YSLIEVIVAFALLALALTLLLGS).

The protein belongs to the GSP I family. As to quaternary structure, type II secretion is composed of four main components: the outer membrane complex, the inner membrane complex, the cytoplasmic secretion ATPase and the periplasm-spanning pseudopilus. Interacts with core component XpsG. In terms of processing, cleaved by prepilin peptidase. Methylated by prepilin peptidase at the amino group of the N-terminal tyrosine once the leader sequence is cleaved by prepilin peptidase.

The protein localises to the cell inner membrane. Functionally, component of the type II secretion system required for the energy-dependent secretion of extracellular factors such as proteases and toxins from the periplasm. Part of the pseudopilus tip complex that is critical for the recognition and binding of secretion substrates. The sequence is that of Type II secretion system protein I (xpsI) from Xanthomonas campestris pv. campestris (strain ATCC 33913 / DSM 3586 / NCPPB 528 / LMG 568 / P 25).